Consider the following 998-residue polypeptide: Antigenic heat-stable 120 kDa protein (998 aa).

The interval 1–69 (GGFMSQDHTG…LSGTISTDDQ (69 aa)) is disordered. Residues 12–21 (ENDEGYESDI) are compositionally biased toward acidic residues. Residues 46 to 68 (TPASSTQSTPAISTLSGTISTDD) are compositionally biased toward polar residues.

Its subcellular location is the cytoplasm. In Rickettsia akari, this protein is Antigenic heat-stable 120 kDa protein (sca4).